A 615-amino-acid chain; its full sequence is Translation initiation factor IF-2 (615 aa).

The tr-type G domain maps to 118–285 (KRPPIVTVMG…AILTLAEINE (168 aa)). The G1 stretch occupies residues 127 to 134 (GHVDHGKT). Residue 127–134 (GHVDHGKT) coordinates GTP. The G2 stretch occupies residues 152-156 (GITQH). The interval 173 to 176 (DTPG) is G3. Residues 173 to 177 (DTPGH) and 227 to 230 (NKMD) each bind GTP. Positions 227–230 (NKMD) are G4. The G5 stretch occupies residues 263–265 (SAI).

It belongs to the TRAFAC class translation factor GTPase superfamily. Classic translation factor GTPase family. IF-2 subfamily.

Its subcellular location is the cytoplasm. Its function is as follows. One of the essential components for the initiation of protein synthesis. Protects formylmethionyl-tRNA from spontaneous hydrolysis and promotes its binding to the 30S ribosomal subunits. Also involved in the hydrolysis of GTP during the formation of the 70S ribosomal complex. This is Translation initiation factor IF-2 from Mycoplasmoides gallisepticum (strain R(low / passage 15 / clone 2)) (Mycoplasma gallisepticum).